A 688-amino-acid polypeptide reads, in one-letter code: Potassium-transporting ATPase ATP-binding subunit (688 aa).

Helical transmembrane passes span 37 to 57 (FLVY…LVGI), 65 to 85 (ILGI…AEAI), 219 to 239 (IALQ…TVSL), and 262 to 282 (VALL…SIGI). The active-site 4-aspartylphosphate intermediate is D313. Residues D350, E354, 383-390 (FTAKTRMS), and K401 contribute to the ATP site. Mg(2+) is bound by residues D524 and D528. The next 3 membrane-spanning stretches (helical) occupy residues 594–614 (FAII…LNIM), 622–642 (AIFS…PLAL), and 668–688 (IIVP…IGIV).

Belongs to the cation transport ATPase (P-type) (TC 3.A.3) family. Type IA subfamily. As to quaternary structure, the system is composed of three essential subunits: KdpA, KdpB and KdpC.

It localises to the cell membrane. The catalysed reaction is K(+)(out) + ATP + H2O = K(+)(in) + ADP + phosphate + H(+). Its function is as follows. Part of the high-affinity ATP-driven potassium transport (or Kdp) system, which catalyzes the hydrolysis of ATP coupled with the electrogenic transport of potassium into the cytoplasm. This subunit is responsible for energy coupling to the transport system and for the release of the potassium ions to the cytoplasm. This Clostridium botulinum (strain Alaska E43 / Type E3) protein is Potassium-transporting ATPase ATP-binding subunit.